The sequence spans 249 residues: E3 ubiquitin-protein ligase RMA1 (249 aa).

Residues 48–97 (CNICLDSVQEPVVTLCGHLFCWPCIHKWLDVQSFSTSDEYQRHRQCPVCK) form an RING-type zinc finger. Residues 231–248 (LGRIFFFFMCCVVLCLLL) traverse the membrane as a helical; Anchor for type IV membrane protein segment.

Ubiquitous. Highly expressed in roots.

It localises to the endoplasmic reticulum membrane. The enzyme catalyses S-ubiquitinyl-[E2 ubiquitin-conjugating enzyme]-L-cysteine + [acceptor protein]-L-lysine = [E2 ubiquitin-conjugating enzyme]-L-cysteine + N(6)-ubiquitinyl-[acceptor protein]-L-lysine.. The protein operates within protein modification; protein ubiquitination. E3 ubiquitin-protein ligase that promotes the ubiquitination and proteasomal degradation of aquaporin PIP2-1. Forms a ubiquitin ligase complex in cooperation with the E2 enzymes UCB8/UCB10. This chain is E3 ubiquitin-protein ligase RMA1 (RMA1), found in Arabidopsis thaliana (Mouse-ear cress).